We begin with the raw amino-acid sequence, 528 residues long: MASKSTDISAIIKDRIRRFDSKIDYSEIGYIVTIGDGIALVNGLDNAKNGEIVKFKNNITGLVLNLEEEVVGVAIFGDANMLSEADLCTRTGEVIAVPVGDELTGRVINAIGNPIDGKGPINSTKRREIFKVAPGVMSRVEVNEPLETGIIAIDSMIPIGKGQRELIIGDRQTGKTSIAIDTIINQKDKNVKCIYVAIGQKNSTVAQITKKLQDSGAMEYTTVIVSGASELAPQQYIAPYSGTAIAEEWMSEGKDCLIIYDDLSKHAIAYRTLSLLLRRPPGREAYPGDVFYLHSQLLERAAKVNYSYGGGSITALPIIETQQGDISAYIPTNVISITDGQIFTRENLFHSGQRPAVDVGFSVSRVGSSAQIKAMKEVSSSLKLELAQYNEMQAFAQFGSDLDDSTIAILKHGHKVYELLKQEQYYPINQLAQTAILLGVKEKIINPLPASQLRRYRDEVIKFMTKELEGIKIGEKIKQNNNALNSSIKEEITTHLVKIVNKIIASLHDYKPEAELPMPAKYLEINNV.

169–176 (GDRQTGKT) serves as a coordination point for ATP.

It belongs to the ATPase alpha/beta chains family. F-type ATPases have 2 components, CF(1) - the catalytic core - and CF(0) - the membrane proton channel. CF(1) has five subunits: alpha(3), beta(3), gamma(1), delta(1), epsilon(1). CF(0) has three main subunits: a(1), b(2) and c(9-12). The alpha and beta chains form an alternating ring which encloses part of the gamma chain. CF(1) is attached to CF(0) by a central stalk formed by the gamma and epsilon chains, while a peripheral stalk is formed by the delta and b chains.

It localises to the cell membrane. It carries out the reaction ATP + H2O + 4 H(+)(in) = ADP + phosphate + 5 H(+)(out). Functionally, produces ATP from ADP in the presence of a proton gradient across the membrane. The alpha chain is a regulatory subunit. This chain is ATP synthase subunit alpha, found in Mycoplasmopsis agalactiae (strain NCTC 10123 / CIP 59.7 / PG2) (Mycoplasma agalactiae).